Reading from the N-terminus, the 206-residue chain is Large ribosomal subunit protein uL4 (206 aa).

Residues 43–78 form a disordered region; the sequence is ARSGNRKQKDREEVKHTTKKPWRQKGTGRARAGMSS. The segment covering 49–58 has biased composition (basic and acidic residues); sequence KQKDREEVKH. Residues 59 to 70 show a composition bias toward basic residues; sequence TTKKPWRQKGTG.

This sequence belongs to the universal ribosomal protein uL4 family. In terms of assembly, part of the 50S ribosomal subunit.

One of the primary rRNA binding proteins, this protein initially binds near the 5'-end of the 23S rRNA. It is important during the early stages of 50S assembly. It makes multiple contacts with different domains of the 23S rRNA in the assembled 50S subunit and ribosome. Functionally, forms part of the polypeptide exit tunnel. The chain is Large ribosomal subunit protein uL4 from Cupriavidus pinatubonensis (strain JMP 134 / LMG 1197) (Cupriavidus necator (strain JMP 134)).